Reading from the N-terminus, the 113-residue chain is Large ribosomal subunit protein uL22 (113 aa).

It belongs to the universal ribosomal protein uL22 family. Part of the 50S ribosomal subunit.

Its function is as follows. This protein binds specifically to 23S rRNA; its binding is stimulated by other ribosomal proteins, e.g. L4, L17, and L20. It is important during the early stages of 50S assembly. It makes multiple contacts with different domains of the 23S rRNA in the assembled 50S subunit and ribosome. Functionally, the globular domain of the protein is located near the polypeptide exit tunnel on the outside of the subunit, while an extended beta-hairpin is found that lines the wall of the exit tunnel in the center of the 70S ribosome. This chain is Large ribosomal subunit protein uL22, found in Solibacter usitatus (strain Ellin6076).